We begin with the raw amino-acid sequence, 86 residues long: Small ribosomal subunit protein bS16 (86 aa).

Belongs to the bacterial ribosomal protein bS16 family.

In Stenotrophomonas maltophilia (strain K279a), this protein is Small ribosomal subunit protein bS16.